A 107-amino-acid polypeptide reads, in one-letter code: Cytochrome c2 (107 aa).

A Pyrrolidone carboxylic acid modification is found at glutamine 1. The heme c site is built by cysteine 13, cysteine 16, histidine 17, and methionine 79.

Belongs to the cytochrome c family. In terms of processing, binds 1 heme c group covalently per subunit.

It is found in the periplasm. In terms of biological role, cytochrome c2 is found mainly in purple, non-sulfur, photosynthetic bacteria where it functions as the electron donor to the oxidized bacteriochlorophyll in the photophosphorylation pathway. However, it may also have a role in the respiratory chain and is found in some non-photosynthetic bacteria. The chain is Cytochrome c2 from Rhodoplanes tepidamans (Rhodoplanes cryptolactis).